The chain runs to 359 residues: Outer membrane protein P5 (359 aa).

Positions 1–21 (MKKTAIALVVAGLAAASVAQA) are cleaved as a signal peptide. 8 beta stranded membrane-spanning segments follow: residues 27–37 (TFYAGVKAGQG), 64–75 (TFTYGVFGGYQI), 83–91 (LAAELGYDD), 110–121 (HGAYLSLKGSYE), 126–134 (LDVYGKAGV), 164–173 (GLFAVGAEYA), 178–185 (LAVRLEYQ), and 211–219 (CINAGISYR). The OmpA-like domain occupies 233–359 (MVSKTFSLNS…RVEIAVNGTK (127 aa)). A disulfide bridge links Cys-332 with Cys-344.

The protein belongs to the outer membrane OOP (TC 1.B.6) superfamily. OmpA family. In terms of assembly, monomer and homodimer.

It is found in the cell outer membrane. It localises to the fimbrium. Its function is as follows. Acts as a fimbriae subunit, allowing adhesion to host cells. With TolR probably plays a role in maintaining the position of the peptidoglycan cell wall in the periplasm. Acts as a porin with low permeability that allows slow penetration of small solutes; an internal gate slows down solute passage. This Haemophilus influenzae protein is Outer membrane protein P5.